The chain runs to 132 residues: Small ribosomal subunit protein uS8 (132 aa).

This sequence belongs to the universal ribosomal protein uS8 family. Part of the 30S ribosomal subunit. Contacts proteins S5 and S12.

Its function is as follows. One of the primary rRNA binding proteins, it binds directly to 16S rRNA central domain where it helps coordinate assembly of the platform of the 30S subunit. The protein is Small ribosomal subunit protein uS8 of Pediococcus pentosaceus (strain ATCC 25745 / CCUG 21536 / LMG 10740 / 183-1w).